Consider the following 752-residue polypeptide: Protein GCN20 (752 aa).

A2 is modified (N-acetylalanine). 2 ABC transporter domains span residues 199–464 (IHID…RKNA) and 532–748 (IQLQ…AAGV). ATP is bound by residues 232-239 (GQNGIGKS) and 565-572 (GANGCGKT).

Belongs to the ABC transporter superfamily. ABCF family. EF3 subfamily. Interacts (via N-terminus) with GCN1 (via C-terminus); this interaction stimulates GCN2 kinase activity in response to amino acid starvation. The GCN1-GCN20 complex interacts with GCN2 on translating ribosomes in amino acid-starved cells; this association stimulates GCN2 kinase activation by uncharged tRNAs, and hence allowing GCN4 translational activation and derepression of amino acid biosynthetic genes. Associates with ribosomes.

In terms of biological role, acts as a positive activator of the GCN2 protein kinase activity in response to in response to low amino acid, carbon, or purine availability. Component of the GCN1-GCN20 complex that forms a complex with GCN2 on translating ribosomes; during this process, GCN20 helps GCN1 to act as a chaperone to facilitate delivery of uncharged tRNAs that enter the A site of ribosomes to the tRNA-binding domain of GCN2, and hence stimulating GCN2 kinase activity. Participates in gene-specific mRNA translation activation, such as the transcriptional activator GCN4, by promoting the GCN2-mediated phosphorylation of eukaryotic translation initiation factor 2 (eIF-2-alpha/SUI2) on 'Ser-52', and hence allowing GCN4-mediated reprogramming of amino acid biosynthetic gene expression to alleviate nutrient depletion. The sequence is that of Protein GCN20 from Saccharomyces cerevisiae (strain ATCC 204508 / S288c) (Baker's yeast).